The primary structure comprises 133 residues: ATP synthase epsilon chain, chloroplastic (133 aa).

It belongs to the ATPase epsilon chain family. F-type ATPases have 2 components, CF(1) - the catalytic core - and CF(0) - the membrane proton channel. CF(1) has five subunits: alpha(3), beta(3), gamma(1), delta(1), epsilon(1). CF(0) has three main subunits: a, b and c.

It localises to the plastid. The protein localises to the chloroplast thylakoid membrane. Functionally, produces ATP from ADP in the presence of a proton gradient across the membrane. In Solanum lycopersicum (Tomato), this protein is ATP synthase epsilon chain, chloroplastic.